A 618-amino-acid polypeptide reads, in one-letter code: Kelch-like protein 40b (618 aa).

The BTB domain maps to 33 to 100 (VDCVLKIKDK…LYTSNINVTE (68 aa)). Residues 135 to 237 (CLAIFRLGLM…PRDYFVKNVE (103 aa)) form the BACK domain. Positions 264 to 284 (PELKKTKNKKSPSEEGQKKGD) are enriched in basic and acidic residues. Residues 264–297 (PELKKTKNKKSPSEEGQKKGDEEEVEEEEEQEER) are disordered. Residues 285–295 (EEEVEEEEEQE) show a composition bias toward acidic residues. 5 Kelch repeats span residues 356–408 (QIFV…EAEN), 409–458 (FIFV…SHNE), 459–506 (MIYV…IHKN), 508–553 (IYVV…SVSG), and 555–608 (LYAV…VLGV).

Belongs to the KLHL40 family. Component of the BCR(KLHL40) E3 ubiquitin ligase complex. Expressed in skeletal muscle. Detected in the eye at much lower levels.

Its subcellular location is the cytoplasm. It is found in the myofibril. It localises to the sarcomere. The protein localises to the a band. The protein resides in the i band. Functionally, substrate-specific adapter of a BCR (BTB-CUL3-RBX1) E3 ubiquitin ligase complex. Required for skeletal muscle development. The chain is Kelch-like protein 40b (klhl40b) from Danio rerio (Zebrafish).